The sequence spans 296 residues: 4-hydroxybenzoate octaprenyltransferase (296 aa).

9 helical membrane passes run 29-49 (IGIY…AEGV), 55-75 (LFIF…INDY), 102-122 (ALVL…FTNA), 124-141 (TIWL…YPFM), 146-166 (FYPQ…AFTA), 169-189 (GSLP…TVAY), 216-236 (ADRL…LLAG), 239-259 (FELG…FVWE), and 271-291 (CFNA…GIVL).

The protein belongs to the UbiA prenyltransferase family. It depends on Mg(2+) as a cofactor.

Its subcellular location is the cell inner membrane. It catalyses the reaction all-trans-octaprenyl diphosphate + 4-hydroxybenzoate = 4-hydroxy-3-(all-trans-octaprenyl)benzoate + diphosphate. It participates in cofactor biosynthesis; ubiquinone biosynthesis. In terms of biological role, catalyzes the prenylation of para-hydroxybenzoate (PHB) with an all-trans polyprenyl group. Mediates the second step in the final reaction sequence of ubiquinone-8 (UQ-8) biosynthesis, which is the condensation of the polyisoprenoid side chain with PHB, generating the first membrane-bound Q intermediate 3-octaprenyl-4-hydroxybenzoate. The sequence is that of 4-hydroxybenzoate octaprenyltransferase from Ectopseudomonas mendocina (strain ymp) (Pseudomonas mendocina).